We begin with the raw amino-acid sequence, 383 residues long: S-adenosylmethionine synthase (383 aa).

His-15 is a binding site for ATP. Asp-17 is a Mg(2+) binding site. K(+) is bound at residue Glu-43. The L-methionine site is built by Glu-56 and Gln-99. The tract at residues 99–109 (QSPDINQGVDR) is flexible loop. Residues 164–166 (DAK), 230–231 (RF), Asp-239, 245–246 (RK), Ala-262, and Lys-266 contribute to the ATP site. L-methionine is bound at residue Asp-239. Lys-270 serves as a coordination point for L-methionine.

The protein belongs to the AdoMet synthase family. Homotetramer; dimer of dimers. Requires Mg(2+) as cofactor. K(+) is required as a cofactor.

It localises to the cytoplasm. The enzyme catalyses L-methionine + ATP + H2O = S-adenosyl-L-methionine + phosphate + diphosphate. It functions in the pathway amino-acid biosynthesis; S-adenosyl-L-methionine biosynthesis; S-adenosyl-L-methionine from L-methionine: step 1/1. Catalyzes the formation of S-adenosylmethionine (AdoMet) from methionine and ATP. The overall synthetic reaction is composed of two sequential steps, AdoMet formation and the subsequent tripolyphosphate hydrolysis which occurs prior to release of AdoMet from the enzyme. This chain is S-adenosylmethionine synthase, found in Pseudoalteromonas translucida (strain TAC 125).